We begin with the raw amino-acid sequence, 175 residues long: dATP triphosphohydrolase (175 aa).

Position 19 (Arg19) interacts with dATP. Residues His34, His66, Asp67, Glu70, Asp75, and Asp119 each contribute to the Co(2+) site.

Belongs to the Caudovirales dATP triphosphohydrolase family. In terms of assembly, homohexamer. It depends on Co(2+) as a cofactor. Zn(2+) is required as a cofactor.

The catalysed reaction is dATP + H2O = 2'-deoxyadenosine + triphosphate + H(+). The enzyme catalyses dADP + H2O = 2'-deoxyadenosine + diphosphate. It catalyses the reaction dAMP + H2O = 2'-deoxyadenosine + phosphate. In terms of biological role, catalyzes the hydrolysis of dATP, dADP and dAMP into dA. This step is essential for Z-genome synthesis (containing aminoadenine instead of adenine). Specifically removes dATP and its precursor dADP from the nucleotide pool of the host, preventing the incorporation of A into the phage genome and favoring the integration of the Z-base into the viral genome. In Cyanophage S-2L (Cyanobacteria phage S-2L), this protein is dATP triphosphohydrolase (datZ).